A 90-amino-acid polypeptide reads, in one-letter code: Small ribosomal subunit protein uS15c (90 aa).

Belongs to the universal ribosomal protein uS15 family. As to quaternary structure, part of the 30S ribosomal subunit.

The protein resides in the plastid. It is found in the chloroplast. The chain is Small ribosomal subunit protein uS15c (rps15-A) from Pelargonium hortorum (Common geranium).